A 726-amino-acid chain; its full sequence is Catalase-peroxidase (726 aa).

Positions 90–213 (WHAAGTYRIG…LAAVQMGLIY (124 aa)) form a cross-link, tryptophyl-tyrosyl-methioninium (Trp-Tyr) (with M-239). The active-site Proton acceptor is H91. Residues 213-239 (YVNPEGPNGNPDPLAAARDIRETFARM) constitute a cross-link (tryptophyl-tyrosyl-methioninium (Tyr-Met) (with W-90)). H254 is a binding site for heme b. A disordered region spans residues 334–359 (AHQWKPKHGAGANTVPDAHDPSKRHA).

It belongs to the peroxidase family. Peroxidase/catalase subfamily. In terms of assembly, homodimer or homotetramer. Requires heme b as cofactor. In terms of processing, formation of the three residue Trp-Tyr-Met cross-link is important for the catalase, but not the peroxidase activity of the enzyme.

It catalyses the reaction H2O2 + AH2 = A + 2 H2O. It carries out the reaction 2 H2O2 = O2 + 2 H2O. Its function is as follows. Bifunctional enzyme with both catalase and broad-spectrum peroxidase activity. In Bradyrhizobium sp. (strain BTAi1 / ATCC BAA-1182), this protein is Catalase-peroxidase.